We begin with the raw amino-acid sequence, 446 residues long: Actin-related protein 6 (446 aa).

Residues 1 to 11 (MTGRGGAKKSR) are compositionally biased toward basic residues. A disordered region spans residues 1 to 24 (MTGRGGAKKSRAAGPAPPTTTLVL).

This sequence belongs to the actin family. ARP6 subfamily. Component of the SWR1 chromatin remodeling complex.

The protein resides in the cytoplasm. It localises to the cytoskeleton. The protein localises to the nucleus. Functionally, component of the SWR1 complex which mediates the ATP-dependent exchange of histone H2A for the H2A variant H2A.Z leading to transcriptional regulation of selected genes by chromatin remodeling. Involved in chromosome stability. The protein is Actin-related protein 6 (arp-6) of Neurospora crassa (strain ATCC 24698 / 74-OR23-1A / CBS 708.71 / DSM 1257 / FGSC 987).